Reading from the N-terminus, the 263-residue chain is Putative cysteine-rich repeat secretory protein 31 (263 aa).

The N-terminal stretch at 1 to 32 is a signal peptide; sequence MHNSYSLSKRLVLVLFLAVVATQLFLIRNVSS. 2 consecutive Gnk2-homologous domains span residues 39 to 141 and 146 to 260; these read YLHH…AIEV and YDNN…FYPF.

It belongs to the cysteine-rich repeat secretory protein family.

It is found in the secreted. This chain is Putative cysteine-rich repeat secretory protein 31 (CRRSP31), found in Arabidopsis thaliana (Mouse-ear cress).